The following is a 222-amino-acid chain: Pleckstrin homology domain-containing family B member 2 (222 aa).

The region spanning 2-109 (AFVKSGWLLR…WKFTLQDSRT (108 aa)) is the PH domain. K20 contributes to the a 1,2-diacyl-sn-glycero-3-phospho-L-serine binding site.

The protein localises to the recycling endosome membrane. Its function is as follows. Involved in retrograde transport of recycling endosomes. This chain is Pleckstrin homology domain-containing family B member 2 (PLEKHB2), found in Pongo abelii (Sumatran orangutan).